A 342-amino-acid polypeptide reads, in one-letter code: scyllo-inositol 2-dehydrogenase (NAD(+)) (342 aa).

The protein belongs to the Gfo/Idh/MocA family.

The enzyme catalyses scyllo-inositol + NAD(+) = scyllo-inosose + NADH + H(+). Its pathway is polyol metabolism. Catalyzes the reversible NAD(+)-dependent oxidation of scyllo-inositol (SI) to 2,4,6/3,5-pentahydroxycyclohexanone (scyllo-inosose or SIS). Is required for SI catabolism that allows B.subtilis to utilize SI as the sole carbon source for growth. Cannot use NADP(+) instead of NAD(+). In Bacillus subtilis (strain 168), this protein is scyllo-inositol 2-dehydrogenase (NAD(+)).